A 223-amino-acid polypeptide reads, in one-letter code: N-terminal Xaa-Pro-Lys N-methyltransferase 1 (223 aa).

Residue Met-1 is modified to N-acetylmethionine. N-acetylthreonine; in N-terminal Xaa-Pro-Lys N-methyltransferase 1, N-terminally processed is present on Thr-2. S-adenosyl-L-methionine is bound by residues Gly-69, Arg-74, 91–93 (DVT), 119–120 (LQ), and Gln-135.

It belongs to the methyltransferase superfamily. NTM1 family.

It is found in the nucleus. The catalysed reaction is N-terminal L-alanyl-L-prolyl-L-lysyl-[protein] + 3 S-adenosyl-L-methionine = N-terminal N,N,N-trimethyl-L-alanyl-L-prolyl-L-lysyl-[protein] + 3 S-adenosyl-L-homocysteine + 3 H(+). It catalyses the reaction N-terminal L-seryl-L-prolyl-L-lysyl-[protein] + 3 S-adenosyl-L-methionine = N-terminal N,N,N-trimethyl-L-seryl-L-prolyl-L-lysyl-[protein] + 3 S-adenosyl-L-homocysteine + 3 H(+). The enzyme catalyses N-terminal L-prolyl-L-prolyl-L-lysyl-[protein] + 2 S-adenosyl-L-methionine = N-terminal N,N-dimethyl-L-prolyl-L-prolyl-L-lysyl-[protein] + 2 S-adenosyl-L-homocysteine + 2 H(+). Functionally, distributive alpha-N-methyltransferase that methylates the N-terminus of target proteins containing the N-terminal motif [Ala/Gly/Pro/Ser]-Pro-Lys when the initiator Met is cleaved. Specifically catalyzes mono-, di- or tri-methylation of the exposed alpha-amino group of the Ala, Gly or Ser residue in the [Ala/Gly/Ser]-Pro-Lys motif and mono- or di-methylation of Pro in the Pro-Pro-Lys motif. Some of the substrates may be primed by NTMT2-mediated monomethylation. Catalyzes the trimethylation of the N-terminal Gly in CENPA (after removal of Met-1). Responsible for the N-terminal methylation of KLHL31, MYL2, MYL3, RB1, RCC1, RPL23A and SET. Required during mitosis for normal bipolar spindle formation and chromosome segregation via its action on RCC1. The polypeptide is N-terminal Xaa-Pro-Lys N-methyltransferase 1 (NTMT1) (Bos taurus (Bovine)).